The following is a 535-amino-acid chain: T-complex protein 1 subunit beta (535 aa).

The residue at position 2 (A2) is an N-acetylalanine. Phosphoserine is present on S3. N6-acetyllysine is present on K13. Position 44 (G44) interacts with ADP. G44 provides a ligand contact to ATP. Phosphoserine is present on S60. Residue D97 participates in Mg(2+) binding. Residues G98, T99, T100, and S101 each contribute to the ADP site. Residues G98, T99, and T100 each contribute to the ATP site. The residue at position 154 (K154) is an N6-acetyllysine. ADP contacts are provided by S168 and S169. Residue K181 is modified to N6-acetyllysine. K248 participates in a covalent cross-link: Glycyl lysine isopeptide (Lys-Gly) (interchain with G-Cter in SUMO2). S260 is modified (phosphoserine). T261 is modified (phosphothreonine). G410, E495, and K500 together coordinate ADP. The ATP site is built by E495 and K500.

The protein belongs to the TCP-1 chaperonin family. Component of the chaperonin-containing T-complex (TRiC), a hexadecamer composed of two identical back-to-back stacked rings enclosing a protein folding chamber. Each ring is made up of eight different subunits: TCP1/CCT1, CCT2, CCT3, CCT4, CCT5, CCT6A/CCT6, CCT7, CCT8. Interacts with PACRG. Interacts with FLCN. Interacts with DLEC1. Interacts with SVEP1.

Its subcellular location is the cytoplasm. It catalyses the reaction ATP + H2O = ADP + phosphate + H(+). In terms of biological role, component of the chaperonin-containing T-complex (TRiC), a molecular chaperone complex that assists the folding of actin, tubulin and other proteins upon ATP hydrolysis. The TRiC complex mediates the folding of WRAP53/TCAB1, thereby regulating telomere maintenance. As part of the TRiC complex may play a role in the assembly of BBSome, a complex involved in ciliogenesis regulating transports vesicles to the cilia. This is T-complex protein 1 subunit beta (CCT2) from Bos taurus (Bovine).